The sequence spans 423 residues: Enolase (423 aa).

Residue glutamine 163 coordinates (2R)-2-phosphoglycerate. Residue glutamate 205 is the Proton donor of the active site. 3 residues coordinate Mg(2+): aspartate 242, glutamate 285, and aspartate 312. (2R)-2-phosphoglycerate is bound by residues lysine 337, arginine 366, serine 367, and lysine 388. Lysine 337 acts as the Proton acceptor in catalysis.

The protein belongs to the enolase family. Mg(2+) serves as cofactor.

It localises to the cytoplasm. The protein localises to the secreted. Its subcellular location is the cell surface. It catalyses the reaction (2R)-2-phosphoglycerate = phosphoenolpyruvate + H2O. It participates in carbohydrate degradation; glycolysis; pyruvate from D-glyceraldehyde 3-phosphate: step 4/5. Functionally, catalyzes the reversible conversion of 2-phosphoglycerate (2-PG) into phosphoenolpyruvate (PEP). It is essential for the degradation of carbohydrates via glycolysis. The protein is Enolase of Desulforapulum autotrophicum (strain ATCC 43914 / DSM 3382 / VKM B-1955 / HRM2) (Desulfobacterium autotrophicum).